The following is a 66-amino-acid chain: Large ribosomal subunit protein bL33c (66 aa).

The protein belongs to the bacterial ribosomal protein bL33 family.

It localises to the plastid. The protein resides in the chloroplast. The chain is Large ribosomal subunit protein bL33c from Solanum bulbocastanum (Wild potato).